The sequence spans 529 residues: G-protein coupled receptor 161 (529 aa).

Topologically, residues 1-30 are extracellular; sequence MSLNSSLSCRKELSNLTEEEGGEGGVIITQ. Asn-4 and Asn-15 each carry an N-linked (GlcNAc...) asparagine glycan. The chain crosses the membrane as a helical span at residues 31–51; that stretch reads FIAIIVITIFVCLGNLVIVVT. Topologically, residues 52 to 64 are cytoplasmic; sequence LYKKSYLLTLSNK. Residues 65–85 traverse the membrane as a helical segment; sequence FVFSLTLSNFLLSVLVLPFVV. The Extracellular segment spans residues 86–101; sequence TSSIRREWIFGVVWCN. Cys-100 and Cys-178 are joined by a disulfide. A helical membrane pass occupies residues 102 to 123; that stretch reads FSALLYLLISSASMLTLGVIAI. Over 124–143 the chain is Cytoplasmic; the sequence is DRYYAVLYPMVYPMKITGNR. The chain crosses the membrane as a helical span at residues 144–164; sequence AVMALVYIWLHSLIGCLPPLF. The Extracellular segment spans residues 165–190; the sequence is GWSSVEFDEFKWMCVAAWHREPGYTA. Residues 191–211 traverse the membrane as a helical segment; it reads FWQIWCALFPFLVMLVCYGFI. The Cytoplasmic segment spans residues 212–269; sequence FRVARVKARKVHCGTVVIVEEDAQRTGRKNSSTSTSSSGSRRNAFQGVVYSANQCKAL. A helical membrane pass occupies residues 270-290; it reads ITILVVLGAFMVTWGPYMVVI. Over 291–306 the chain is Extracellular; the sequence is ASEALWGKSSVSPSLE. Residues 307–327 form a helical membrane-spanning segment; it reads TWATWLSFASAVCHPLIYGLW. The Cytoplasmic portion of the chain corresponds to 328–529; sequence NKTVRKELLG…EGDVLAAEQR (202 aa).

Belongs to the G-protein coupled receptor 1 family.

Its subcellular location is the cell projection. The protein resides in the cilium membrane. It localises to the cell membrane. Functionally, key negative regulator of Shh signaling, which promotes the processing of GLI3 into GLI3R during neural tube development. Recruited by TULP3 and the IFT-A complex to primary cilia and acts as a regulator of the PKA-dependent basal repression machinery in Shh signaling by increasing cAMP levels, leading to promote the PKA-dependent processing of GLI3 into GLI3R and repress the Shh signaling. In presence of SHH, it is removed from primary cilia and is internalized into recycling endosomes, preventing its activity and allowing activation of the Shh signaling. Its ligand is unknown. The sequence is that of G-protein coupled receptor 161 (GPR161) from Homo sapiens (Human).